A 410-amino-acid chain; its full sequence is Probable peptidoglycan glycosyltransferase FtsW (410 aa).

Residues 1-37 (MRSEERQLNLFGTSVNWSWPNLFKEREAPGMQLYDRA) are Cytoplasmic-facing. Residues 38–58 (LLFAVLSLICFGFVMVMSASM) form a helical membrane-spanning segment. The Periplasmic segment spans residues 59–69 (PEAQSLTGNPY). The chain crosses the membrane as a helical span at residues 70–90 (HFAIRHFAYLVGCAVIAAVVL). Residues 91-99 (RIEMSRWQQ) lie on the Cytoplasmic side of the membrane. The chain crosses the membrane as a helical span at residues 100 to 120 (FSPLLLLIVGIMLVAVLLVGT). At 121–131 (SVNGATRWLSV) the chain is on the periplasmic side. The chain crosses the membrane as a helical span at residues 132–154 (GPIRIQVAELAKFAFTIYMAGYL). The Cytoplasmic segment spans residues 155-163 (VRRHQEIRE). The chain crosses the membrane as a helical span at residues 164–184 (NAKGFYKPIAVFAVYAFLILM). Residues 185–186 (QP) are Periplasmic-facing. A helical membrane pass occupies residues 187 to 207 (DLGTVVVLFVGTVGLLFLAGA). Position 208 (R208) is a topological domain, cytoplasmic. Residues 209-229 (LLDFFALILTGVMAFVALVLL) form a helical membrane-spanning segment. Residues 230–291 (EPYRMRRVTS…PEAHTDFIFA (62 aa)) are Periplasmic-facing. A helical transmembrane segment spans residues 292-312 (VIGEELGFIGIVVVLSVLLFV). Topologically, residues 313–336 (ALRAIKLGNLCIEIDKPFEGYLAY) are cytoplasmic. A helical transmembrane segment spans residues 337-357 (AIGIWFCFQTVVNVGASIGML). Over 358–364 (PTKGLTL) the chain is Periplasmic. The helical transmembrane segment at 365-385 (PFISYGGSSLWVMTAAAMILI) threads the bilayer. Over 386–410 (RIDHERRLSSIQAVQGKKVNDNREY) the chain is Cytoplasmic.

This sequence belongs to the SEDS family. FtsW subfamily.

Its subcellular location is the cell inner membrane. The enzyme catalyses [GlcNAc-(1-&gt;4)-Mur2Ac(oyl-L-Ala-gamma-D-Glu-L-Lys-D-Ala-D-Ala)](n)-di-trans,octa-cis-undecaprenyl diphosphate + beta-D-GlcNAc-(1-&gt;4)-Mur2Ac(oyl-L-Ala-gamma-D-Glu-L-Lys-D-Ala-D-Ala)-di-trans,octa-cis-undecaprenyl diphosphate = [GlcNAc-(1-&gt;4)-Mur2Ac(oyl-L-Ala-gamma-D-Glu-L-Lys-D-Ala-D-Ala)](n+1)-di-trans,octa-cis-undecaprenyl diphosphate + di-trans,octa-cis-undecaprenyl diphosphate + H(+). The protein operates within cell wall biogenesis; peptidoglycan biosynthesis. Peptidoglycan polymerase that is essential for cell division. This chain is Probable peptidoglycan glycosyltransferase FtsW, found in Shewanella sediminis (strain HAW-EB3).